Consider the following 449-residue polypeptide: Glucose-6-phosphate isomerase (449 aa).

Catalysis depends on glutamate 291, which acts as the Proton donor. Catalysis depends on residues histidine 312 and lysine 426.

It belongs to the GPI family.

The protein localises to the cytoplasm. The catalysed reaction is alpha-D-glucose 6-phosphate = beta-D-fructose 6-phosphate. It functions in the pathway carbohydrate biosynthesis; gluconeogenesis. Its pathway is carbohydrate degradation; glycolysis; D-glyceraldehyde 3-phosphate and glycerone phosphate from D-glucose: step 2/4. In terms of biological role, catalyzes the reversible isomerization of glucose-6-phosphate to fructose-6-phosphate. The sequence is that of Glucose-6-phosphate isomerase from Streptococcus pneumoniae serotype 19F (strain G54).